Consider the following 355-residue polypeptide: Holliday junction branch migration complex subunit RuvB (355 aa).

A large ATPase domain (RuvB-L) region spans residues 4–190 (TDKLAAERII…FGIVARLEFY (187 aa)). Residues Leu-29, Arg-30, Gly-71, Lys-74, Thr-75, Thr-76, 137–139 (EDY), Arg-180, Tyr-190, and Arg-227 contribute to the ATP site. Thr-75 is a binding site for Mg(2+). The segment at 191–261 (NAEQLARIVT…VADAALKMLD (71 aa)) is small ATPAse domain (RuvB-S). Positions 264–355 (AVGFDLMDRK…LPGLWDSAAT (92 aa)) are head domain (RuvB-H). 3 residues coordinate DNA: Arg-300, Arg-319, and Arg-324.

The protein belongs to the RuvB family. Homohexamer. Forms an RuvA(8)-RuvB(12)-Holliday junction (HJ) complex. HJ DNA is sandwiched between 2 RuvA tetramers; dsDNA enters through RuvA and exits via RuvB. An RuvB hexamer assembles on each DNA strand where it exits the tetramer. Each RuvB hexamer is contacted by two RuvA subunits (via domain III) on 2 adjacent RuvB subunits; this complex drives branch migration. In the full resolvosome a probable DNA-RuvA(4)-RuvB(12)-RuvC(2) complex forms which resolves the HJ.

It localises to the cytoplasm. The catalysed reaction is ATP + H2O = ADP + phosphate + H(+). The RuvA-RuvB-RuvC complex processes Holliday junction (HJ) DNA during genetic recombination and DNA repair, while the RuvA-RuvB complex plays an important role in the rescue of blocked DNA replication forks via replication fork reversal (RFR). RuvA specifically binds to HJ cruciform DNA, conferring on it an open structure. The RuvB hexamer acts as an ATP-dependent pump, pulling dsDNA into and through the RuvAB complex. RuvB forms 2 homohexamers on either side of HJ DNA bound by 1 or 2 RuvA tetramers; 4 subunits per hexamer contact DNA at a time. Coordinated motions by a converter formed by DNA-disengaged RuvB subunits stimulates ATP hydrolysis and nucleotide exchange. Immobilization of the converter enables RuvB to convert the ATP-contained energy into a lever motion, pulling 2 nucleotides of DNA out of the RuvA tetramer per ATP hydrolyzed, thus driving DNA branch migration. The RuvB motors rotate together with the DNA substrate, which together with the progressing nucleotide cycle form the mechanistic basis for DNA recombination by continuous HJ branch migration. Branch migration allows RuvC to scan DNA until it finds its consensus sequence, where it cleaves and resolves cruciform DNA. The chain is Holliday junction branch migration complex subunit RuvB from Paraburkholderia xenovorans (strain LB400).